Here is a 364-residue protein sequence, read N- to C-terminus: Valine dehydrogenase (364 aa).

Residue Lys91 is part of the active site. Residue 191-197 (GVGKVGH) coordinates NAD(+).

This sequence belongs to the Glu/Leu/Phe/Val dehydrogenases family. As to quaternary structure, homodimer.

It is found in the cytoplasm. It catalyses the reaction L-valine + NAD(+) + H2O = 3-methyl-2-oxobutanoate + NH4(+) + NADH + H(+). It functions in the pathway amino-acid degradation; L-valine degradation. With respect to regulation, inhibited by pyridoxal 5'-phosphate (PLP). Functionally, oxidative deamination of branched-chain amino acids. Oxidizes L-valine and L-alpha-aminobutyric acid efficiently, and L-alanine and L-isoleucine less efficiently. D-valine and L-glutamate were not substrates for the enzyme. The catabolism of valine is the major source of fatty acid precursors for macrolide biosynthesis and a vital source of antibiotic precursors. The protein is Valine dehydrogenase of Streptomyces albus (strain ATCC 21838 / DSM 41398 / FERM P-419 / JCM 4703 / NBRC 107858).